We begin with the raw amino-acid sequence, 404 residues long: Tryptophan synthase beta chain (404 aa).

An N6-(pyridoxal phosphate)lysine modification is found at K99.

Belongs to the TrpB family. As to quaternary structure, tetramer of two alpha and two beta chains. It depends on pyridoxal 5'-phosphate as a cofactor.

It catalyses the reaction (1S,2R)-1-C-(indol-3-yl)glycerol 3-phosphate + L-serine = D-glyceraldehyde 3-phosphate + L-tryptophan + H2O. It participates in amino-acid biosynthesis; L-tryptophan biosynthesis; L-tryptophan from chorismate: step 5/5. The beta subunit is responsible for the synthesis of L-tryptophan from indole and L-serine. The chain is Tryptophan synthase beta chain from Rhizobium rhizogenes (strain K84 / ATCC BAA-868) (Agrobacterium radiobacter).